Consider the following 305-residue polypeptide: UDP-3-O-acyl-N-acetylglucosamine deacetylase (305 aa).

The Zn(2+) site is built by His78, His235, and Asp239. His262 (proton donor) is an active-site residue.

Belongs to the LpxC family. Requires Zn(2+) as cofactor.

It carries out the reaction a UDP-3-O-[(3R)-3-hydroxyacyl]-N-acetyl-alpha-D-glucosamine + H2O = a UDP-3-O-[(3R)-3-hydroxyacyl]-alpha-D-glucosamine + acetate. It participates in glycolipid biosynthesis; lipid IV(A) biosynthesis; lipid IV(A) from (3R)-3-hydroxytetradecanoyl-[acyl-carrier-protein] and UDP-N-acetyl-alpha-D-glucosamine: step 2/6. Functionally, catalyzes the hydrolysis of UDP-3-O-myristoyl-N-acetylglucosamine to form UDP-3-O-myristoylglucosamine and acetate, the committed step in lipid A biosynthesis. The sequence is that of UDP-3-O-acyl-N-acetylglucosamine deacetylase from Geobacter sp. (strain M21).